The sequence spans 515 residues: Fatty acyl-CoA reductase 2 (515 aa).

Topologically, residues 1–464 (MSMIAAFYSN…KAKQHLRRLR (464 aa)) are cytoplasmic. A helical membrane pass occupies residues 465-484 (NIHYLFNTALFLIIWRLLIA). Residues 485-515 (RSQMARNVWFFIVSFCYKFISYFRASSTLKV) lie on the Peroxisomal side of the membrane.

Belongs to the fatty acyl-CoA reductase family. As to expression, specifically expressed in the meibomian glands of the eyelid and the sebaceous glands of the skin. Also expressed in the brain where large quantities of ether lipids are synthesized.

The protein localises to the peroxisome membrane. It carries out the reaction a long-chain fatty acyl-CoA + 2 NADPH + 2 H(+) = a long-chain primary fatty alcohol + 2 NADP(+) + CoA. The catalysed reaction is hexadecanoyl-CoA + 2 NADPH + 2 H(+) = hexadecan-1-ol + 2 NADP(+) + CoA. It catalyses the reaction octadecanoyl-CoA + 2 NADPH + 2 H(+) = octadecan-1-ol + 2 NADP(+) + CoA. The enzyme catalyses a very long-chain fatty acyl-CoA + 2 NADPH + 2 H(+) = a very long-chain primary fatty alcohol + 2 NADP(+) + CoA. It carries out the reaction an ultra-long-chain fatty acyl-CoA + 2 NADPH + 2 H(+) = an ultra long-chain primary fatty alcohol + 2 NADP(+) + CoA. The catalysed reaction is eicosanoyl-CoA + 2 NADPH + 2 H(+) = eicosan-1-ol + 2 NADP(+) + CoA. It catalyses the reaction docosanoyl-CoA + 2 NADPH + 2 H(+) = docosan-1-ol + 2 NADP(+) + CoA. The enzyme catalyses tetracosanoyl-CoA + 2 NADPH + 2 H(+) = tetracosan-1-ol + 2 NADP(+) + CoA. It carries out the reaction hexacosanoyl-CoA + 2 NADPH + 2 H(+) = hexacosan-1-ol + 2 NADP(+) + CoA. The catalysed reaction is octacosanoyl-CoA + 2 NADPH + 2 H(+) = octacosan-1-ol + 2 NADP(+) + CoA. It catalyses the reaction triacontanoyl-CoA + 2 NADPH + 2 H(+) = triacontan-1-ol + 2 NADP(+) + CoA. The enzyme catalyses 18-methylnonadecanoyl-CoA + 2 NADPH + 2 H(+) = 18-methylnonadecan-1-ol + 2 NADP(+) + CoA. It carries out the reaction 20-methylheneicosanoyl-CoA + 2 NADPH + 2 H(+) = 20-methylheneicosan-1-ol + 2 NADP(+) + CoA. The catalysed reaction is 22-methyltricosanoyl-CoA + 2 NADPH + 2 H(+) = 22-methyltricosan-1-ol + 2 NADP(+) + CoA. It catalyses the reaction 24-methylpentacosanoyl-CoA + 2 NADPH + 2 H(+) = 24-methylpentacosan-1-ol + 2 NADP(+) + CoA. Functionally, catalyzes the reduction of saturated but not unsaturated C16 or C18 fatty acyl-CoA to fatty alcohols. A lower activity can be observed with shorter fatty acyl-CoA substrates. Can produce very long-chain and ultra long-chain FAls, regardless of whether they have a straight or branched chain. It may play a role in the production of ether lipids/plasmalogens and wax monoesters which synthesis requires fatty alcohols as substrates. This chain is Fatty acyl-CoA reductase 2, found in Mus musculus (Mouse).